We begin with the raw amino-acid sequence, 188 residues long: UPF0488 protein C8orf33 homolog (188 aa).

3 disordered regions span residues Met1 to Gln65, Gln87 to Pro112, and Ala144 to Glu182. Residue Ala2 is modified to N-acetylalanine. Ser41 is modified (phosphoserine). Over residues Pro166 to Glu182 the composition is skewed to basic and acidic residues.

Belongs to the UPF0488 family.

This Bos taurus (Bovine) protein is UPF0488 protein C8orf33 homolog.